Consider the following 569-residue polypeptide: GATOR1 complex protein NPRL3 (569 aa).

2 disordered regions span residues 27–60 (PFQR…EQDG) and 416–477 (PSEE…GDSP). 2 stretches are compositionally biased toward polar residues: residues 34-52 (HPAS…SNTG) and 438-468 (SLST…NSSA). Position 476 is a phosphoserine (Ser476).

This sequence belongs to the NPR3 family. Within the GATOR complex, component of the GATOR1 subcomplex, made of DEPDC5, NPRL2 and NPRL3. GATOR1 mediates the strong interaction of the GATOR complex with small GTPases Rag (RagA/RRAGA, RagB/RRAGB, RagC/RRAGC and/or RagD/RRAGD) heterodimers. GATOR1 interacts with GPR155/LYCHOS; interaction takes place in presence of cholesterol and prevents interaction between GATOR1 and KICSTOR. As to expression, widely expressed. Expressed in the frontal lobe cortex as well as in the temporal, parietal, and occipital lobes.

It localises to the lysosome membrane. In terms of biological role, as a component of the GATOR1 complex functions as an inhibitor of the amino acid-sensing branch of the mTORC1 pathway. In response to amino acid depletion, the GATOR1 complex has GTPase activating protein (GAP) activity and strongly increases GTP hydrolysis by RagA/RRAGA (or RagB/RRAGB) within heterodimeric Rag complexes, thereby turning them into their inactive GDP-bound form, releasing mTORC1 from lysosomal surface and inhibiting mTORC1 signaling. In the presence of abundant amino acids, the GATOR1 complex is negatively regulated by GATOR2, the other GATOR subcomplex, in this amino acid-sensing branch of the TORC1 pathway. The polypeptide is GATOR1 complex protein NPRL3 (Homo sapiens (Human)).